The primary structure comprises 62 residues: Large ribosomal subunit protein uL29 (62 aa).

This sequence belongs to the universal ribosomal protein uL29 family.

The chain is Large ribosomal subunit protein uL29 from Geobacter metallireducens (strain ATCC 53774 / DSM 7210 / GS-15).